We begin with the raw amino-acid sequence, 978 residues long: Regulator of MON1-CCZ1 complex homolog (978 aa).

Composition is skewed to low complexity over residues 311-351 (TSTP…MISS) and 479-495 (NNNN…NNNN). Disordered stretches follow at residues 311–363 (TSTP…HKEQ), 474–546 (SINQ…NSKT), 558–665 (KQQQ…NNHV), and 703–727 (EKEK…NNNI). Polar residues predominate over residues 496-515 (TAQTLNSTGNLSNSISIGGM). Residues 516 to 539 (NTSTDNLTTTTTTSSSISSSPSNS) show a composition bias toward low complexity. The segment covering 582-591 (GDGGSGGSGG) has biased composition (gly residues). Low complexity-rich tracts occupy residues 592–663 (SFYN…NNNN) and 710–727 (NNNN…NNNI). One can recognise a Mic1 domain in the interval 735–908 (KLELDSKYLI…HPSFDKYIKL (174 aa)). The disordered stretch occupies residues 955–978 (NNSSPTLRSSNSLNSSPRLQYSNN).

This sequence belongs to the RMC1 family.

The protein localises to the lysosome membrane. It localises to the late endosome membrane. In terms of biological role, may have a role in autophagy. This chain is Regulator of MON1-CCZ1 complex homolog, found in Dictyostelium discoideum (Social amoeba).